A 227-amino-acid chain; its full sequence is Ribose-5-phosphate isomerase A (227 aa).

Substrate is bound by residues 30–33 (TGST), 86–89 (DGAD), and 99–102 (KGMG). E108 (proton acceptor) is an active-site residue. K126 serves as a coordination point for substrate.

This sequence belongs to the ribose 5-phosphate isomerase family. In terms of assembly, homodimer.

It carries out the reaction aldehydo-D-ribose 5-phosphate = D-ribulose 5-phosphate. It participates in carbohydrate degradation; pentose phosphate pathway; D-ribose 5-phosphate from D-ribulose 5-phosphate (non-oxidative stage): step 1/1. Its function is as follows. Catalyzes the reversible conversion of ribose-5-phosphate to ribulose 5-phosphate. The sequence is that of Ribose-5-phosphate isomerase A from Thermus thermophilus (strain ATCC 27634 / DSM 579 / HB8).